Consider the following 339-residue polypeptide: TATA-box-binding protein (339 aa).

Disordered regions lie at residues 1-21 (MDQNNSLPPYAQGLASPQGAM), 36-71 (TGLTPQPIQNTNSLSILEEQQRQQQQQQQQQQQQQQ), and 127-159 (LTTAPLPGTTPLYPSPMTPMTPITPATPASESS). Positions 38-50 (LTPQPIQNTNSLS) are enriched in polar residues. Composition is skewed to low complexity over residues 57 to 71 (RQQQQQQQQQQQQQQ), 127 to 138 (LTTAPLPGTTPL), and 146 to 156 (MTPITPATPAS). A run of 2 repeats spans residues 165–241 (LQNI…ARVV) and 255–332 (IQNM…YPIL). DNA-binding residues include Asn-167, Arg-203, Lys-218, Asn-257, and Arg-294.

This sequence belongs to the TBP family. In terms of assembly, binds DNA as monomer. Component of the TFIID basal transcription factor complex, composed of TATA-box-binding protein TBP, and a number of TBP-associated factors (TAFs), including TAF1, TAF2, TAF3, TAF4, TAF5, TAF6, TAF7, TAF8, TAF9, TAF10, TAF11, TAF12 and TAF13. Part of a TFIID-containing RNA polymerase II pre-initiation complex that is composed of TBP and at least GTF2A1, GTF2A2, GTF2E1, GTF2E2, GTF2F1, GTF2H2, GTF2H3, GTF2H4, GTF2H5, GTF2B, TCEA1, ERCC2, ERCC3, TAF1, TAF2, TAF3, TAF4, TAF5, TAF6, TAF7, TAF8, TAF9, TAF10, TAF11, TAF12 and TAF13. Component of the transcription factor SL1/TIF-IB complex, composed of TBP and at least TAF1A, TAF1B, TAF1C and TAF1D. Association of TBP to form either TFIID or SL1/TIF-IB appears to be mutually exclusive. Interacts with TAF1A, TAF1B and TAF1C. Interacts with TFIIB, NCOA6, DRAP1, DR1 and ELF3. Interacts with SPIB, SNAPC1, SNAPC2 and SNAPC4. Interacts with UTF1. Interacts with BRF2; this interaction promotes recruitment of BRF2 to TATA box-containing promoters. Interacts with UBTFD. Interacts with GPBP1D. Interacts with CITED2. Interacts with ATF7IP. Interacts with LLPH. Interacts with HSF1 (via transactivation domain). Interacts with GTF2B (via C-terminus); this interaction with promoter-bound TBP guides RNA polymerase II into the pre-initiation complex (PIC). Interacts with PAX5. Interacts with MSX1; the interaction may inhibit MSX1 autoinactivation. As to quaternary structure, (Microbial infection) Interacts with HIV-1 Tat. (Microbial infection) Interacts with herpes simplex virus 1 ICP4. In terms of assembly, (Microbial infection) Interacts with herpes simplex virus 2 ICP4. As to quaternary structure, (Microbial infection) Interacts with human adenovirus E1A protein; this interaction probably disrupts the TBP-TATA complex. As to expression, widely expressed, with levels highest in the testis and ovary.

It localises to the nucleus. The TFIID basal transcription factor complex plays a major role in the initiation of RNA polymerase II (Pol II)-dependent transcription. TFIID recognizes and binds promoters with or without a TATA box via its subunit TBP, a TATA-box-binding protein, and promotes assembly of the pre-initiation complex (PIC). The TFIID complex consists of TBP and TBP-associated factors (TAFs), including TAF1, TAF2, TAF3, TAF4, TAF5, TAF6, TAF7, TAF8, TAF9, TAF10, TAF11, TAF12 and TAF13. The TFIID complex structure can be divided into 3 modules TFIID-A, TFIID-B, and TFIID-C. TBP forms the TFIID-A module together with TAF3 and TAF5. TBP is a general transcription factor that functions at the core of the TFIID complex. During assembly of the core PIC on the promoter, as part of TFIID, TBP binds to and also bends promoter DNA, irrespective of whether the promoter contains a TATA box. Component of a BRF2-containing transcription factor complex that regulates transcription mediated by RNA polymerase III. Component of the transcription factor SL1/TIF-IB complex, which is involved in the assembly of the PIC during RNA polymerase I-dependent transcription. The rate of PIC formation probably is primarily dependent on the rate of association of SL1 with the rDNA promoter. SL1 is involved in stabilization of nucleolar transcription factor 1/UBTF on rDNA. This chain is TATA-box-binding protein (TBP), found in Homo sapiens (Human).